A 354-amino-acid polypeptide reads, in one-letter code: UDP-N-acetylglucosamine--N-acetylmuramyl-(pentapeptide) pyrophosphoryl-undecaprenol N-acetylglucosamine transferase (354 aa).

Residues 15-17 (TGG), Asn127, Arg163, Ser191, Ile244, 263-268 (ALTVSE), and Gln288 each bind UDP-N-acetyl-alpha-D-glucosamine.

Belongs to the glycosyltransferase 28 family. MurG subfamily.

Its subcellular location is the cell inner membrane. It catalyses the reaction di-trans,octa-cis-undecaprenyl diphospho-N-acetyl-alpha-D-muramoyl-L-alanyl-D-glutamyl-meso-2,6-diaminopimeloyl-D-alanyl-D-alanine + UDP-N-acetyl-alpha-D-glucosamine = di-trans,octa-cis-undecaprenyl diphospho-[N-acetyl-alpha-D-glucosaminyl-(1-&gt;4)]-N-acetyl-alpha-D-muramoyl-L-alanyl-D-glutamyl-meso-2,6-diaminopimeloyl-D-alanyl-D-alanine + UDP + H(+). It functions in the pathway cell wall biogenesis; peptidoglycan biosynthesis. Cell wall formation. Catalyzes the transfer of a GlcNAc subunit on undecaprenyl-pyrophosphoryl-MurNAc-pentapeptide (lipid intermediate I) to form undecaprenyl-pyrophosphoryl-MurNAc-(pentapeptide)GlcNAc (lipid intermediate II). This Aliivibrio fischeri (strain ATCC 700601 / ES114) (Vibrio fischeri) protein is UDP-N-acetylglucosamine--N-acetylmuramyl-(pentapeptide) pyrophosphoryl-undecaprenol N-acetylglucosamine transferase.